The primary structure comprises 772 residues: Endoplasmic reticulum membrane sensor NFE2L1 (772 aa).

Residues 7-24 traverse the membrane as a helical; Signal-anchor for type II membrane protein segment; sequence YFTEGLIQFTILLSLIGV. The interval 191 to 199 is cholesterol recognition/amino acid consensus (CRAC) region; that stretch reads IFDYSHRQK. The segment covering 198-216 has biased composition (basic and acidic residues); it reads QKESEVDKELSDGRERGDG. Residues 198-223 are disordered; that stretch reads QKESEVDKELSDGRERGDGWRSAGGQ. Asn332, Asn340, Asn362, Asn402, Asn407, Asn414, Asn425, and Asn429 each carry an N-linked (GlcNAc...) asparagine glycan. The interval 472–531 is disordered; sequence EEEFDSDSGLSLDSGHSPASLSSSEASSSSSSSSSSSSSSSSSSSSFSEEGAVGYSSDSE. The span at 478–519 shows a compositional bias: low complexity; the sequence is DSGLSLDSGHSPASLSSSEASSSSSSSSSSSSSSSSSSSSFS. Residue Asn574 is glycosylated (N-linked (GlcNAc...) asparagine). A disordered region spans residues 581 to 613; it reads PGTLDPEEPKLPSVGKKSSKEKPSEFLDKQMSR. The span at 598-613 shows a compositional bias: basic and acidic residues; the sequence is SSKEKPSEFLDKQMSR. In terms of domain architecture, bZIP spans 654 to 717; sequence LIRDIRRRGK…RQMKQKVQNL (64 aa). The segment at 656–675 is basic motif; the sequence is RDIRRRGKNKMAAQNCRKRK. The interval 682–696 is leucine-zipper; that stretch reads LERDVEDLQRDKSKL. The Nuclear localization signal signature appears at 761–768; that stretch reads RRQERKQK.

It belongs to the bZIP family. CNC subfamily. In terms of assembly, interacts (via the bZIP domain) with small MAF protein (MAFF, MAFG or MAFK); required for binding to antioxidant response elements (AREs) on DNA. In terms of processing, cleaved at Leu-104 following retrotranslocation, releasing the protein from the endoplasmic reticulum membrane and forming the transcription factor NRF1 that translocates into the nucleus.

It is found in the endoplasmic reticulum membrane. The protein resides in the nucleus. Its function is as follows. Endoplasmic reticulum membrane sensor that translocates into the nucleus in response to various stresses to act as a transcription factor. Constitutes a precursor of the transcription factor NRF1. Able to detect various cellular stresses, such as cholesterol excess, oxidative stress or proteasome inhibition. In response to stress, it is released from the endoplasmic reticulum membrane following cleavage and translocates into the nucleus to form the transcription factor NRF1. Acts as a key sensor of cholesterol excess: in excess cholesterol conditions, the endoplasmic reticulum membrane form of the protein directly binds cholesterol via its CRAC motif, preventing cleavage and release of the transcription factor NRF1, thereby allowing expression of genes promoting cholesterol removal. Involved in proteasome homeostasis: in response to proteasome inhibition, it is released from the endoplasmic reticulum membrane, translocates to the nucleus and activates expression of genes encoding proteasome subunits. Functionally, CNC-type bZIP family transcription factor that translocates to the nucleus and regulates expression of target genes in response to various stresses. Heterodimerizes with small-Maf proteins (MAFF, MAFG or MAFK) and binds DNA motifs including the antioxidant response elements (AREs), which regulate expression of genes involved in oxidative stress response. Activates or represses expression of target genes, depending on the context. Plays a key role in cholesterol homeostasis by acting as a sensor of cholesterol excess: in low cholesterol conditions, translocates into the nucleus and represses expression of genes involved in defense against cholesterol excess. In excess cholesterol conditions, the endoplasmic reticulum membrane form of the protein directly binds cholesterol via its CRAC motif, preventing cleavage and release of the transcription factor NRF1, thereby allowing expression of genes promoting cholesterol removal. Critical for redox balance in response to oxidative stress: acts by binding the AREs motifs on promoters and mediating activation of oxidative stress response genes. Involved in proteasome homeostasis: in response to proteasome inhibition, mediates the 'bounce-back' of proteasome subunits by translocating into the nucleus and activating expression of genes encoding proteasome subunits. This is Endoplasmic reticulum membrane sensor NFE2L1 from Gallus gallus (Chicken).